Reading from the N-terminus, the 303-residue chain is ATP phosphoribosyltransferase (303 aa).

This sequence belongs to the ATP phosphoribosyltransferase family. Long subfamily. It depends on Mg(2+) as a cofactor.

The protein resides in the cytoplasm. The enzyme catalyses 1-(5-phospho-beta-D-ribosyl)-ATP + diphosphate = 5-phospho-alpha-D-ribose 1-diphosphate + ATP. Its pathway is amino-acid biosynthesis; L-histidine biosynthesis; L-histidine from 5-phospho-alpha-D-ribose 1-diphosphate: step 1/9. With respect to regulation, feedback inhibited by histidine. In terms of biological role, catalyzes the condensation of ATP and 5-phosphoribose 1-diphosphate to form N'-(5'-phosphoribosyl)-ATP (PR-ATP). Has a crucial role in the pathway because the rate of histidine biosynthesis seems to be controlled primarily by regulation of HisG enzymatic activity. This chain is ATP phosphoribosyltransferase, found in Stenotrophomonas maltophilia (strain R551-3).